The primary structure comprises 425 residues: Gamma-glutamyl phosphate reductase (425 aa).

It belongs to the gamma-glutamyl phosphate reductase family.

The protein localises to the cytoplasm. It catalyses the reaction L-glutamate 5-semialdehyde + phosphate + NADP(+) = L-glutamyl 5-phosphate + NADPH + H(+). The protein operates within amino-acid biosynthesis; L-proline biosynthesis; L-glutamate 5-semialdehyde from L-glutamate: step 2/2. Functionally, catalyzes the NADPH-dependent reduction of L-glutamate 5-phosphate into L-glutamate 5-semialdehyde and phosphate. The product spontaneously undergoes cyclization to form 1-pyrroline-5-carboxylate. The polypeptide is Gamma-glutamyl phosphate reductase (Opitutus terrae (strain DSM 11246 / JCM 15787 / PB90-1)).